The following is a 232-amino-acid chain: Purine nucleoside phosphorylase DeoD-type (232 aa).

Histidine 4 is an a purine D-ribonucleoside binding site. Phosphate is bound by residues glycine 20, arginine 24, arginine 43, and 87–90 (RIGT). Residues 179–181 (EME) and 203–204 (SD) contribute to the a purine D-ribonucleoside site. The active-site Proton donor is the aspartate 204.

This sequence belongs to the PNP/UDP phosphorylase family. In terms of assembly, homohexamer; trimer of homodimers.

It carries out the reaction a purine D-ribonucleoside + phosphate = a purine nucleobase + alpha-D-ribose 1-phosphate. It catalyses the reaction a purine 2'-deoxy-D-ribonucleoside + phosphate = a purine nucleobase + 2-deoxy-alpha-D-ribose 1-phosphate. Its function is as follows. Catalyzes the reversible phosphorolytic breakdown of the N-glycosidic bond in the beta-(deoxy)ribonucleoside molecules, with the formation of the corresponding free purine bases and pentose-1-phosphate. The chain is Purine nucleoside phosphorylase DeoD-type from Caldanaerobacter subterraneus subsp. tengcongensis (strain DSM 15242 / JCM 11007 / NBRC 100824 / MB4) (Thermoanaerobacter tengcongensis).